Consider the following 487-residue polypeptide: UDP-N-acetylmuramate--L-alanine ligase (487 aa).

124–130 is an ATP binding site; the sequence is GTHGKTT.

It belongs to the MurCDEF family.

It localises to the cytoplasm. It catalyses the reaction UDP-N-acetyl-alpha-D-muramate + L-alanine + ATP = UDP-N-acetyl-alpha-D-muramoyl-L-alanine + ADP + phosphate + H(+). It participates in cell wall biogenesis; peptidoglycan biosynthesis. Its function is as follows. Cell wall formation. The sequence is that of UDP-N-acetylmuramate--L-alanine ligase from Acaryochloris marina (strain MBIC 11017).